We begin with the raw amino-acid sequence, 264 residues long: 3-methyl-2-oxobutanoate hydroxymethyltransferase 1 (264 aa).

Residues Asp-45 and Asp-84 each contribute to the Mg(2+) site. 3-methyl-2-oxobutanoate contacts are provided by residues 45 to 46, Asp-84, and Lys-112; that span reads DS. Position 114 (Glu-114) interacts with Mg(2+). The Proton acceptor role is filled by Glu-181.

It belongs to the PanB family. As to quaternary structure, homodecamer; pentamer of dimers. Mg(2+) is required as a cofactor.

Its subcellular location is the cytoplasm. The catalysed reaction is 3-methyl-2-oxobutanoate + (6R)-5,10-methylene-5,6,7,8-tetrahydrofolate + H2O = 2-dehydropantoate + (6S)-5,6,7,8-tetrahydrofolate. It functions in the pathway cofactor biosynthesis; (R)-pantothenate biosynthesis; (R)-pantoate from 3-methyl-2-oxobutanoate: step 1/2. Its function is as follows. Catalyzes the reversible reaction in which hydroxymethyl group from 5,10-methylenetetrahydrofolate is transferred onto alpha-ketoisovalerate to form ketopantoate. This Aliivibrio fischeri (strain ATCC 700601 / ES114) (Vibrio fischeri) protein is 3-methyl-2-oxobutanoate hydroxymethyltransferase 1.